The chain runs to 774 residues: Probable E3 ubiquitin-protein ligase HECTD2 (774 aa).

Residues Met-1–Lys-51 are disordered. Ser-9 is modified (phosphoserine). Positions Pro-21–Leu-34 are enriched in basic and acidic residues. One can recognise an HECT domain in the interval Lys-435–Glu-774. Cys-742 serves as the catalytic Glycyl thioester intermediate.

It carries out the reaction S-ubiquitinyl-[E2 ubiquitin-conjugating enzyme]-L-cysteine + [acceptor protein]-L-lysine = [E2 ubiquitin-conjugating enzyme]-L-cysteine + N(6)-ubiquitinyl-[acceptor protein]-L-lysine.. It functions in the pathway protein modification; protein ubiquitination. Its function is as follows. E3 ubiquitin-protein ligase which accepts ubiquitin from an E2 ubiquitin-conjugating enzyme in the form of a thioester and then directly transfers the ubiquitin to targeted substrates. This Mus musculus (Mouse) protein is Probable E3 ubiquitin-protein ligase HECTD2 (Hectd2).